The sequence spans 298 residues: Cyanophycinase (298 aa).

Residues Ser155, Glu173, and His197 each act as charge relay system in the active site.

The protein belongs to the peptidase S51 family.

The catalysed reaction is [L-4-(L-arginin-2-N-yl)aspartate](n) + H2O = [L-4-(L-arginin-2-N-yl)aspartate](n-1) + L-4-(L-arginin-2-N-yl)aspartate. In terms of biological role, exopeptidase that catalyzes the hydrolytic cleavage of multi-L-arginyl-poly-L-aspartic acid (cyanophycin; a water-insoluble reserve polymer) into aspartate-arginine dipeptides. This is Cyanophycinase (cphB) from Trichormus variabilis (strain ATCC 29413 / PCC 7937) (Anabaena variabilis).